Consider the following 362-residue polypeptide: Protein OCA4 (362 aa).

Required for replication of Brome mosaic virus (BMV). The sequence is that of Protein OCA4 (OCA4) from Saccharomyces cerevisiae (strain ATCC 204508 / S288c) (Baker's yeast).